We begin with the raw amino-acid sequence, 296 residues long: Probable ribosomal RNA small subunit methyltransferase A (296 aa).

Positions 1–16 are enriched in polar residues; sequence MTDATSGSDPDSTTPV. The disordered stretch occupies residues 1–25; sequence MTDATSGSDPDSTTPVDLTGEDFRD. His-44, Leu-46, Gly-72, Glu-93, Asp-121, and Asn-136 together coordinate S-adenosyl-L-methionine.

It belongs to the class I-like SAM-binding methyltransferase superfamily. rRNA adenine N(6)-methyltransferase family. RsmA subfamily.

Its subcellular location is the cytoplasm. Its function is as follows. Specifically dimethylates two adjacent adenosines in the loop of a conserved hairpin near the 3'-end of 16S rRNA in the 30S particle. May play a critical role in biogenesis of 30S subunits. This Haloquadratum walsbyi (strain DSM 16790 / HBSQ001) protein is Probable ribosomal RNA small subunit methyltransferase A.